The sequence spans 855 residues: DNA mismatch repair protein MutS (855 aa).

613-620 (GPNMGGKS) is an ATP binding site.

This sequence belongs to the DNA mismatch repair MutS family.

In terms of biological role, this protein is involved in the repair of mismatches in DNA. It is possible that it carries out the mismatch recognition step. This protein has a weak ATPase activity. The protein is DNA mismatch repair protein MutS of Azotobacter vinelandii (strain DJ / ATCC BAA-1303).